A 375-amino-acid chain; its full sequence is Delta(12) fatty acid dehydrogenase (375 aa).

Transmembrane regions (helical) follow at residues Ile54–Leu74 and Leu77–Gly97. A Histidine box-1 motif is present at residues His98–His102. The chain crosses the membrane as a helical span at residues Trp110–Trp130. The Histidine box-2 signature appears at His134–His138. 3 consecutive transmembrane segments (helical) span residues Leu172–Ser192, Val218–Ala238, and Ala242–Ile262. A Histidine box-3 motif is present at residues His308 to His312.

This sequence belongs to the fatty acid desaturase type 1 family. Fe cation serves as cofactor. As to expression, seed.

The protein localises to the membrane. It catalyses the reaction a (9Z,12Z)-octadecadienoyl-containing glycerolipid + 2 Fe(II)-[cytochrome b5] + O2 + 2 H(+) = a (9Z)-octadec-9-en-12-ynoyl-containing glycerolipid + 2 Fe(III)-[cytochrome b5] + 2 H2O. The protein operates within lipid metabolism; polyunsaturated fatty acid biosynthesis. In terms of biological role, changes the delta-12 double bond of linoleic acid into a triple bond in the biosynthesis of crepenynic acid. The chain is Delta(12) fatty acid dehydrogenase from Crepis alpina (Hawksbeard).